A 186-amino-acid polypeptide reads, in one-letter code: Putative manganese efflux pump MntP (186 aa).

6 helical membrane passes run 1–21 (MSFL…FAVS), 41–61 (VFFG…GSAV), 71–91 (WIAF…ALYG), 105–125 (LLML…SFAF), 130–150 (ILEP…CGAV), and 165–185 (IIGG…HLLW).

This sequence belongs to the MntP (TC 9.B.29) family.

The protein localises to the cell membrane. Functionally, probably functions as a manganese efflux pump. This chain is Putative manganese efflux pump MntP, found in Methanosarcina barkeri (strain Fusaro / DSM 804).